The primary structure comprises 306 residues: Ribonuclease Z (306 aa).

Zn(2+)-binding residues include His63, His65, Asp67, His68, His141, Asp211, and His269. Asp67 functions as the Proton acceptor in the catalytic mechanism.

Belongs to the RNase Z family. In terms of assembly, homodimer. Requires Zn(2+) as cofactor.

It catalyses the reaction Endonucleolytic cleavage of RNA, removing extra 3' nucleotides from tRNA precursor, generating 3' termini of tRNAs. A 3'-hydroxy group is left at the tRNA terminus and a 5'-phosphoryl group is left at the trailer molecule.. In terms of biological role, zinc phosphodiesterase, which displays some tRNA 3'-processing endonuclease activity. Probably involved in tRNA maturation, by removing a 3'-trailer from precursor tRNA. The protein is Ribonuclease Z of Staphylococcus aureus (strain MSSA476).